A 396-amino-acid chain; its full sequence is S-adenosylmethionine synthase (396 aa).

Glutamate 12 contributes to the Mg(2+) binding site. ATP is bound at residue histidine 18. Residue glutamate 46 coordinates K(+). Positions 59 and 102 each coordinate L-methionine. ATP-binding positions include 170–172, 238–241, aspartate 249, 255–256, alanine 272, lysine 276, and lysine 280; these read DGK, SGRF, and RK. Aspartate 249 contacts L-methionine. L-methionine is bound at residue lysine 280.

Belongs to the AdoMet synthase family. In terms of assembly, homotetramer. Mn(2+) serves as cofactor. The cofactor is Mg(2+). Requires Co(2+) as cofactor. K(+) is required as a cofactor.

Its subcellular location is the cytoplasm. It carries out the reaction L-methionine + ATP + H2O = S-adenosyl-L-methionine + phosphate + diphosphate. Its pathway is amino-acid biosynthesis; S-adenosyl-L-methionine biosynthesis; S-adenosyl-L-methionine from L-methionine: step 1/1. Catalyzes the formation of S-adenosylmethionine from methionine and ATP. The reaction comprises two steps that are both catalyzed by the same enzyme: formation of S-adenosylmethionine (AdoMet) and triphosphate, and subsequent hydrolysis of the triphosphate. The sequence is that of S-adenosylmethionine synthase (SAMS) from Triticum aestivum (Wheat).